The following is a 337-amino-acid chain: Monoacylglycerol lipase ABHD6 (337 aa).

Over 1-8 (MDLDVVNM) the chain is Extracellular. A helical; Signal-anchor for type II membrane protein transmembrane segment spans residues 9–29 (FVIAGGTLAIPILAFVASFLL). Over 30–337 (WPSALIRIYY…HNPDNNKKLN (308 aa)) the chain is Cytoplasmic. Catalysis depends on serine 148, which acts as the Nucleophile. Catalysis depends on charge relay system residues aspartate 278 and histidine 306.

It belongs to the AB hydrolase superfamily.

The protein resides in the late endosome membrane. It is found in the lysosome membrane. It localises to the mitochondrion membrane. The enzyme catalyses Hydrolyzes glycerol monoesters of long-chain fatty acids.. It catalyses the reaction 1-octanoylglycerol + H2O = octanoate + glycerol + H(+). The catalysed reaction is 1-decanoylglycerol + H2O = decanoate + glycerol + H(+). It carries out the reaction 1-dodecanoylglycerol + H2O = dodecanoate + glycerol + H(+). The enzyme catalyses 1-tetradecanoylglycerol + H2O = tetradecanoate + glycerol + H(+). It catalyses the reaction 2-hexadecanoylglycerol + H2O = glycerol + hexadecanoate + H(+). The catalysed reaction is 2-(9Z-octadecenoyl)-glycerol + H2O = glycerol + (9Z)-octadecenoate + H(+). It carries out the reaction 1-(9Z-octadecenoyl)-glycerol + H2O = glycerol + (9Z)-octadecenoate + H(+). The enzyme catalyses 2-(9Z,12Z-octadecadienoyl)-glycerol + H2O = (9Z,12Z)-octadecadienoate + glycerol + H(+). It catalyses the reaction 2-(5Z,8Z,11Z,14Z-eicosatetraenoyl)-glycerol + H2O = glycerol + (5Z,8Z,11Z,14Z)-eicosatetraenoate + H(+). The catalysed reaction is 1-(5Z,8Z,11Z,14Z-eicosatetraenoyl)-glycerol + H2O = glycerol + (5Z,8Z,11Z,14Z)-eicosatetraenoate + H(+). It carries out the reaction 1-(9Z,12Z-octadecadienoyl)-glycerol + H2O = (9Z,12Z)-octadecadienoate + glycerol + H(+). The enzyme catalyses 3-(9Z-octadecenoyl)-sn-glycero-1-phospho-(3'-(9Z-octadecenoyl)-1'-sn-glycerol) + H2O = 3-(9Z-octadecenoyl)-sn-glycero-1-phospho-(1'-sn-glycerol) + (9Z)-octadecenoate + H(+). It catalyses the reaction (S,S)-2-(9Z-octadecenoyl)-sn-glycero-1-phospho-(2'-(9Z-octadecenoyl)-1'-sn-glycerol) + H2O = (S,S)-2-(9Z-octadecenoyl)-sn-glycero-1-phospho-(1'-sn-glycerol) + (9Z)-octadecenoate + H(+). The catalysed reaction is (R,R)-2-(9Z-octadecenoyl)-sn-glycero-3-phospho-(2'-(9Z-octadecenoyl)-3'-sn-glycerol) + H2O = (R,R)-2-(9Z-octadecenoyl)-sn-glycero-3-phospho-(3'-sn-glycerol) + (9Z)-octadecenoate + H(+). Its function is as follows. Lipase that preferentially hydrolysis medium-chain saturated monoacylglycerols including 2-arachidonoylglycerol. Through 2-arachidonoylglycerol degradation may regulate endocannabinoid signaling pathways. Also has a lysophosphatidyl lipase activity with a preference for lysophosphatidylglycerol among other lysophospholipids. Also able to degrade bis(monoacylglycero)phosphate (BMP) and constitutes the major enzyme for BMP catabolism. BMP, also known as lysobisphosphatidic acid, is enriched in late endosomes and lysosomes and plays a key role in the formation of intraluminal vesicles and in lipid sorting. The protein is Monoacylglycerol lipase ABHD6 of Rattus norvegicus (Rat).